The chain runs to 504 residues: uncharacterized protein (504 aa).

This sequence to M.thermoautotrophicum MTH1137.

This is an uncharacterized protein from Methanocaldococcus jannaschii (strain ATCC 43067 / DSM 2661 / JAL-1 / JCM 10045 / NBRC 100440) (Methanococcus jannaschii).